Here is a 262-residue protein sequence, read N- to C-terminus: Virulence plasmid protein pGP6-D-related protein (262 aa).

This sequence belongs to the UPF0137 (pGP6-D) family.

This is Virulence plasmid protein pGP6-D-related protein from Chlamydia muridarum (strain MoPn / Nigg).